The chain runs to 351 residues: Adenine deaminase (351 aa).

Residues H20, H22, and H200 each contribute to the Zn(2+) site. E203 serves as the catalytic Proton donor. D281 is a Zn(2+) binding site. D282 contributes to the substrate binding site.

The protein belongs to the metallo-dependent hydrolases superfamily. Adenosine and AMP deaminases family. Adenine deaminase type 2 subfamily. The cofactor is Zn(2+).

The enzyme catalyses adenine + H2O + H(+) = hypoxanthine + NH4(+). Its function is as follows. Catalyzes the hydrolytic deamination of adenine to hypoxanthine. Plays an important role in the purine salvage pathway and in nitrogen catabolism. The chain is Adenine deaminase from Cupriavidus taiwanensis (strain DSM 17343 / BCRC 17206 / CCUG 44338 / CIP 107171 / LMG 19424 / R1) (Ralstonia taiwanensis (strain LMG 19424)).